We begin with the raw amino-acid sequence, 540 residues long: Decreased expression in renal and prostate cancer protein (540 aa).

Over residues Met-1–Pro-12 the composition is skewed to basic and acidic residues. Disordered regions lie at residues Met-1 to Ala-264 and Ser-304 to Gln-389. Composition is skewed to low complexity over residues Pro-113 to Ser-125 and Gly-180 to Gly-192. Positions Ser-304–Ser-316 are enriched in polar residues. Phosphoserine is present on Ser-313. The span at Pro-321–Pro-330 shows a compositional bias: low complexity. Arg-375 is subject to Asymmetric dimethylarginine. Arg-403 bears the Omega-N-methylarginine mark. Ser-439 is subject to Phosphoserine. The interval Gly-516–Pro-540 is disordered.

The protein belongs to the DERPC family.

The protein localises to the nucleus. Its function is as follows. Potential tumor suppressor. The chain is Decreased expression in renal and prostate cancer protein from Bos taurus (Bovine).